Reading from the N-terminus, the 203-residue chain is Recombination protein RecR (203 aa).

The segment at 56-71 (CTVCGNVSDDERCRIC) adopts a C4-type zinc-finger fold. A Toprim domain is found at 79-179 (SVVCVVEEPK…TVTRIASGLP (101 aa)).

It belongs to the RecR family.

Functionally, may play a role in DNA repair. It seems to be involved in an RecBC-independent recombinational process of DNA repair. It may act with RecF and RecO. This is Recombination protein RecR from Mycobacterium leprae (strain TN).